Here is a 185-residue protein sequence, read N- to C-terminus: Translation initiation factor IF-3 (185 aa).

It belongs to the IF-3 family. As to quaternary structure, monomer.

Its subcellular location is the cytoplasm. Functionally, IF-3 binds to the 30S ribosomal subunit and shifts the equilibrium between 70S ribosomes and their 50S and 30S subunits in favor of the free subunits, thus enhancing the availability of 30S subunits on which protein synthesis initiation begins. In Bacteroides thetaiotaomicron (strain ATCC 29148 / DSM 2079 / JCM 5827 / CCUG 10774 / NCTC 10582 / VPI-5482 / E50), this protein is Translation initiation factor IF-3.